Here is a 351-residue protein sequence, read N- to C-terminus: Thiamine-phosphate synthase (351 aa).

Residues 1–129 form a unknown region; sequence MVEPYSQKEQ…AKACKQMRYQ (129 aa). The segment at 65–85 is disordered; it reads LRAARDTPGDPGTELTHPQEE. Positions 130-351 are thiamine-phosphate synthase; sequence VYTLESNLMG…SQLNRIKPEL (222 aa). 4-amino-2-methyl-5-(diphosphooxymethyl)pyrimidine is bound by residues 177–181 and Asn-209; that span reads QYRDK. 2 residues coordinate Mg(2+): Asp-210 and Asp-229. A 4-amino-2-methyl-5-(diphosphooxymethyl)pyrimidine-binding site is contributed by Ser-248. 274-276 is a binding site for 2-[(2R,5Z)-2-carboxy-4-methylthiazol-5(2H)-ylidene]ethyl phosphate; it reads TPT. Residue Lys-277 participates in 4-amino-2-methyl-5-(diphosphooxymethyl)pyrimidine binding. Residue Gly-304 participates in 2-[(2R,5Z)-2-carboxy-4-methylthiazol-5(2H)-ylidene]ethyl phosphate binding.

Belongs to the thiamine-phosphate synthase family. Mg(2+) is required as a cofactor.

The enzyme catalyses 2-[(2R,5Z)-2-carboxy-4-methylthiazol-5(2H)-ylidene]ethyl phosphate + 4-amino-2-methyl-5-(diphosphooxymethyl)pyrimidine + 2 H(+) = thiamine phosphate + CO2 + diphosphate. The catalysed reaction is 2-(2-carboxy-4-methylthiazol-5-yl)ethyl phosphate + 4-amino-2-methyl-5-(diphosphooxymethyl)pyrimidine + 2 H(+) = thiamine phosphate + CO2 + diphosphate. It carries out the reaction 4-methyl-5-(2-phosphooxyethyl)-thiazole + 4-amino-2-methyl-5-(diphosphooxymethyl)pyrimidine + H(+) = thiamine phosphate + diphosphate. It functions in the pathway cofactor biosynthesis; thiamine diphosphate biosynthesis; thiamine phosphate from 4-amino-2-methyl-5-diphosphomethylpyrimidine and 4-methyl-5-(2-phosphoethyl)-thiazole: step 1/1. Functionally, condenses 4-methyl-5-(beta-hydroxyethyl)thiazole monophosphate (THZ-P) and 2-methyl-4-amino-5-hydroxymethyl pyrimidine pyrophosphate (HMP-PP) to form thiamine monophosphate (TMP). This Nostoc punctiforme (strain ATCC 29133 / PCC 73102) protein is Thiamine-phosphate synthase.